Consider the following 151-residue polypeptide: Small ribosomal subunit protein uS11 (151 aa).

The protein belongs to the universal ribosomal protein uS11 family.

The protein is Small ribosomal subunit protein uS11 (RPS14) of Podocoryna carnea (Hydrozoan).